The primary structure comprises 248 residues: Probable transcriptional regulatory protein Acel_1346 (248 aa).

It belongs to the TACO1 family.

The protein localises to the cytoplasm. The polypeptide is Probable transcriptional regulatory protein Acel_1346 (Acidothermus cellulolyticus (strain ATCC 43068 / DSM 8971 / 11B)).